Here is a 554-residue protein sequence, read N- to C-terminus: MREETEPSERTLGLTPTWSVATVLTIFVFVSLIVERSIHRLSNWLQKTKRKPLFAALEKMKEELMLLGFISLLLTATSSTIANICVSSSFHNDRFVPCTPSEINEELESTISTVKRTQLTRSLFLHTLRRRLSGIGEDTCSEGHEPFLSYEGMEQLHRFIFIMAVTHVTYSCLTMLLAIVKIHRWRIWEDEVHMDRNDCLTVVAREKIFRRQTTFVQYHTSAPLVKNRLLIWVICFFRQFGHSVVRSDYLTLRKGFIMNHHLTLTYDFHSYMIRSMEEEFQKIVGVSGPLWGFVVGFMLFNIKGSNLYFWLAIIPITLVLLVGAKLQHVIATLALENASITEYASGIKLRPRDELFWFKKPELLLSLIHFIQFQNAFELASFFWFWWQFGYNSCFLRNHLLVYLRLILGFSGQFLCSYSTLPLYALVTQMGTNYKAALLPQRVRETINGWGKATRRKRRHGLYGDDSTIRTETSTIASVDEYNDQVLDVSETSPVQDNELELQLIRGACGNSSSVETPILRPCASISSTTFSRLQTETTDSLSRSSSLPMRREC.

Over 1-13 (MREETEPSERTLG) the chain is Extracellular. A helical transmembrane segment spans residues 14–34 (LTPTWSVATVLTIFVFVSLIV). Topologically, residues 35 to 63 (ERSIHRLSNWLQKTKRKPLFAALEKMKEE) are cytoplasmic. The helical transmembrane segment at 64–84 (LMLLGFISLLLTATSSTIANI) threads the bilayer. Topologically, residues 85–158 (CVSSSFHNDR…SYEGMEQLHR (74 aa)) are extracellular. The helical transmembrane segment at 159 to 179 (FIFIMAVTHVTYSCLTMLLAI) threads the bilayer. Topologically, residues 180 to 281 (VKIHRWRIWE…MIRSMEEEFQ (102 aa)) are cytoplasmic. Residues 282-302 (KIVGVSGPLWGFVVGFMLFNI) form a helical membrane-spanning segment. Lys303 is a topological domain (extracellular). Residues 304–324 (GSNLYFWLAIIPITLVLLVGA) traverse the membrane as a helical segment. The Cytoplasmic portion of the chain corresponds to 325–366 (KLQHVIATLALENASITEYASGIKLRPRDELFWFKKPELLLS). A helical membrane pass occupies residues 367–387 (LIHFIQFQNAFELASFFWFWW). The Extracellular portion of the chain corresponds to 388-406 (QFGYNSCFLRNHLLVYLRL). Residues 407-427 (ILGFSGQFLCSYSTLPLYALV) traverse the membrane as a helical segment. At 428-554 (TQMGTNYKAA…SSSLPMRREC (127 aa)) the chain is on the cytoplasmic side. The calmodulin-binding stretch occupies residues 441-462 (QRVRETINGWGKATRRKRRHGL).

This sequence belongs to the MLO family.

The protein localises to the membrane. Functionally, may be involved in modulation of pathogen defense and leaf cell death. Activity seems to be regulated by Ca(2+)-dependent calmodulin binding and seems not to require heterotrimeric G proteins. The chain is MLO-like protein 14 (MLO14) from Arabidopsis thaliana (Mouse-ear cress).